Reading from the N-terminus, the 588-residue chain is MRSAFLSKLQTHAPVAQPQVISSGLAKEAGDLPQEQEVDAEDQLSADAQDGVRKIQATTQVWSKGHLIFAYVMIWVITFVDTMQQGMSNSLLPYVTSSFRLHSLTASTMIMSNIIGGLIKLPLAKVLDIWGRPQGFLIMVGALTIGLVMMAACNNVKTYAAAQVFYWVGYNGMSYTISIFIADTSALKNRALMFAFVSSPYIATVWVGGPLATVFLNGPGFRWGYGAFAIITPAITCPLYAVFAWNYKKAKDAGLLPEKTHSRTFTQSLKHYFFEFDIIGIILLASGLALFLLPFSLYSYQKDQWRSSLVISMIIVGGLLLIAFALYEKYRAPVCFIPFELLFDRTVLGACILAASLFVSFYIWDSYFSSFLQIVNDLSITQASYIVNIYSIGACFWSIIVGILVRWSGRFKWLALYFGVPLTILGVGLMITFRQPDVNIGYIIMCQIFIAFAGGTCVITEQMAVMAATSHQYVAVVLAVESMFANIGGAIGQTVAAAIWTGVFPQRLAEYLPDEAKANATLIYGDLTVQKSYPVGSLERIAINRAYGDGQKYMLIGGTAILAVGLGATMMWRDIKVKDFKQVKGLVV.

13 helical membrane-spanning segments follow: residues 60-80, 104-124, 133-153, 161-181, 191-211, 225-245, 278-298, 307-327, 348-368, 385-405, 413-433, 440-460, and 473-495; these read QVWSKGHLIFAYVMIWVITFV, LTASTMIMSNIIGGLIKLPLA, PQGFLIMVGALTIGLVMMAAC, AAQVFYWVGYNGMSYTISIFI, ALMFAFVSSPYIATVWVGGPL, YGAFAIITPAITCPLYAVFAW, IIGIILLASGLALFLLPFSLY, SSLVISMIIVGGLLLIAFALY, LGACILAASLFVSFYIWDSYF, YIVNIYSIGACFWSIIVGILV, WLALYFGVPLTILGVGLMITF, IGYIIMCQIFIAFAGGTCVIT, and YVAVVLAVESMFANIGGAIGQTV. Residue asparagine 519 is glycosylated (N-linked (GlcNAc...) asparagine). Residues 552–572 form a helical membrane-spanning segment; it reads KYMLIGGTAILAVGLGATMMW.

Belongs to the major facilitator superfamily.

The protein resides in the membrane. Functionally, major facilitator transporter involved in siderophore transport. The polypeptide is MFS siderochrome iron transporter 1 (Ajellomyces capsulatus (Darling's disease fungus)).